Consider the following 389-residue polypeptide: Liposome tubulation protein MamY (389 aa).

Residues 1 to 31 (MAIAAIMGDVLMLMGFNKAAFGKLNSASRAA) are Cytoplasmic-facing. Residues 32 to 52 (LIGAVIWAVLSIVYLTIFNGW) traverse the membrane as a helical segment. Topologically, residues 53–62 (KNLFTMLPHE) are lumenal. A helical membrane pass occupies residues 63–83 (FFIVLLSIALPIGLTVLILML). Residues 84-389 (SRIVKSVDTL…TETAPDSGMD (306 aa)) are Cytoplasmic-facing.

The protein belongs to the magnetosome MamY family.

It localises to the magnetosome membrane. Its function is as follows. Causes tubulation when added to magnetosome-derived liposomes, binds liposomes; may be involved in constriction of the cell inner membrane to form mature magnetosomes. Binds preferentially to cardiolipin, a component of bacterial membranes, with very poor to no binding of other tested (phospho)lipids. Addition of cardiolipin to magnetosome-derived lipids increases tubulation. May function with MamX, MamZ amd Mms6. This chain is Liposome tubulation protein MamY, found in Paramagnetospirillum magneticum (strain ATCC 700264 / AMB-1) (Magnetospirillum magneticum).